Here is a 561-residue protein sequence, read N- to C-terminus: Putative transport protein YbjL (561 aa).

Helical transmembrane passes span 8-28 (LLNG…LCLG), 32-52 (LGSV…LLGQ), 66-86 (FMLF…SIFF), 94-114 (MLAL…GKLF), and 158-178 (NLSL…IVGA). RCK C-terminal domains lie at 200–288 (RGLD…SFRN) and 292–373 (VFDR…RIGF). The next 5 helical transmembrane spans lie at 383 to 403 (LLAF…TFQF), 406 to 426 (FSFG…LGFL), 447 to 467 (FGLM…ISNG), 475 to 495 (MLIA…LFGA), and 540 to 560 (AIAN…WPGL).

Belongs to the AAE transporter (TC 2.A.81) family. YbjL subfamily.

It is found in the cell membrane. In Salmonella agona (strain SL483), this protein is Putative transport protein YbjL.